Reading from the N-terminus, the 364-residue chain is MKFNEFLNHLSNYEPGKDIEVIAKEYGVKEVIKLASNENPFGTPPKAIECLRQNANKAHLYPDDSMIELKSTLAQKYKVQNENIIIGAGSDQVIEFAIHAKLNSKNAFLQAGVTFAMYEIYAKQCGAKCYKTQSITHDLNEFKKLYEAHKDEIKLIFLCLPNNPLGECLDASEVTKFIKGVDEDCLVVIDAAYNEFASFKDSKKHLEPCELIKEFDNVLYLGTFSKLYGLGGLRIGYGIANANIISAFYKLRAPFNVSNLALKAAVAAINDDEFAKKTLENNFSQMELYKEFAKKYDIKIIDSYTNFITYFFDEKNSTDLSEKLLKKGIIIRNLKSYGLNAIRITIGTSYENEKFFTEFDKILR.

Lysine 226 carries the post-translational modification N6-(pyridoxal phosphate)lysine.

Belongs to the class-II pyridoxal-phosphate-dependent aminotransferase family. Histidinol-phosphate aminotransferase subfamily. In terms of assembly, homodimer. Pyridoxal 5'-phosphate serves as cofactor.

It catalyses the reaction L-histidinol phosphate + 2-oxoglutarate = 3-(imidazol-4-yl)-2-oxopropyl phosphate + L-glutamate. It functions in the pathway amino-acid biosynthesis; L-histidine biosynthesis; L-histidine from 5-phospho-alpha-D-ribose 1-diphosphate: step 7/9. In Campylobacter jejuni subsp. jejuni serotype O:23/36 (strain 81-176), this protein is Histidinol-phosphate aminotransferase.